Here is a 196-residue protein sequence, read N- to C-terminus: MRRLIVLFAAALAVLGATAPALAAPKTETAVFAGGCFWCMEHDMQGVPGVLKVESGYTGGHLKNPTYRDVTSETSGHYEAVRVTYDPAKLDYGFLLYRYWRLVDPTDDGGQFCDRGPSYRPAVFVTPAQRPIAEKSRTEAAKRLKTGTMKTQILPAQTFYLAEEYHRDYAKRNKLNYFAYRTGCGRDARLKQVWGG.

The active site involves Cys36.

The protein belongs to the MsrA Met sulfoxide reductase family.

The catalysed reaction is L-methionyl-[protein] + [thioredoxin]-disulfide + H2O = L-methionyl-(S)-S-oxide-[protein] + [thioredoxin]-dithiol. It catalyses the reaction [thioredoxin]-disulfide + L-methionine + H2O = L-methionine (S)-S-oxide + [thioredoxin]-dithiol. Functionally, has an important function as a repair enzyme for proteins that have been inactivated by oxidation. Catalyzes the reversible oxidation-reduction of methionine sulfoxide in proteins to methionine. The sequence is that of Peptide methionine sulfoxide reductase MsrA 2 (msrA2) from Caulobacter vibrioides (strain ATCC 19089 / CIP 103742 / CB 15) (Caulobacter crescentus).